The primary structure comprises 749 residues: MEALIPVINKLQDVFNTVGADIIQLPQIVVVGTQSSGKSSVLESLVGRDLLPRGTGIVTRRPLILQLVHVAPEDKRKTTGEENDPATWKNSRHLSKGVEAEEWGKFLHTKNKLYTDFDEIRQEIENETERISGNNKGVSPEPIHLKIFSPNVVNLTLVDLPGMTKVPVGDQPKDIELQIRELILRFISNPNSIILAVTAANTDMATSEALKISREVDPDGRRTLAVITKLDLMDAGTDAMDVLMGRVIPVKLGIIGVVNRSQLDINNKKSVTDSIRDEYAFLQKKYPSLANRNGTKYLARTLNRLLMHHIRDCLPELKTRINVLAAQYQSLLNSYGEPVDDKSATLLQLITKFATEYCNTIEGTAKYIETSELCGGARICYIFHETFGRTLESVDPLGGLNTIDILTAIRNATGPRPALFVPEVSFELLVKRQIKRLEEPSLRCVELVHEEMQRIIQHCSNYSTQELLRFPKLHDAIVEVVTCLLRKRLPVTNEMVHNLVAIELAYINTKHPDFADACGLMNNNIEEQRRNRLARELPSAVSRDKSSKVPSALAPASQEPSPAASAEADGKLIQESRRETKNAASGGGGVGDAVQEPTTGNWRGMLKTSKAEELLAEEKSKPIPIMPASPQKGHAVNLLDVPVPVARKLSAREQRDCEVIERLIKSYFLIVRKNIQDSVPKAVMHFLVNHVKDTLQSELVGQLYKSSLLDDLLTESEDMAQRRKEAADMLKALQGASQIIAEIRETHLW.

At methionine 1 the chain carries N-acetylmethionine. The Dynamin-type G domain maps to isoleucine 22–proline 315. The interval glycine 32 to serine 39 is G1 motif. Glycine 32–serine 40 contributes to the GTP binding site. The segment at valine 58–arginine 60 is G2 motif. Residues aspartate 74 to histidine 93 are disordered. The G3 motif stretch occupies residues aspartate 159–glycine 162. A G4 motif region spans residues threonine 228–aspartate 231. Residues threonine 228–aspartate 234 and asparagine 259–glutamine 262 each bind GTP. Residues valine 258 to serine 261 are G5 motif. The segment at tyrosine 357–isoleucine 502 is middle domain. The interval asparagine 461–glutamate 698 is interaction with GSK3B. The interval alanine 515–asparagine 582 is b domain. Residues glutamate 536–glycine 604 are disordered. Serine 542 carries the phosphoserine modification. Residues lysine 545 and lysine 548 each participate in a glycyl lysine isopeptide (Lys-Gly) (interchain with G-Cter in SUMO) cross-link. A compositionally biased stretch (low complexity) spans proline 550–glutamate 567. Residue serine 561 is modified to Phosphoserine. Positions alanine 568–lysine 581 are enriched in basic and acidic residues. Residues lysine 571 and lysine 581 each participate in a glycyl lysine isopeptide (Lys-Gly) (interchain with G-Cter in SUMO) cross-link. O-linked (GlcNAc) threonine glycosylation is found at threonine 598 and threonine 599. Lysine 607 participates in a covalent cross-link: Glycyl lysine isopeptide (Lys-Gly) (interchain with G-Cter in SUMO). N6-acetyllysine; alternate is present on lysine 610. A Glycyl lysine isopeptide (Lys-Gly) (interchain with G-Cter in SUMO); alternate cross-link involves residue lysine 610. Lysine 619 participates in a covalent cross-link: Glycyl lysine isopeptide (Lys-Gly) (interchain with G-Cter in SUMO). The residue at position 620 (serine 620) is a Phosphoserine. Lysine 621 is covalently cross-linked (Glycyl lysine isopeptide (Lys-Gly) (interchain with G-Cter in SUMO)). At serine 629 the chain carries Phosphoserine; by CDK1 and PINK1. Phosphoserine; by CAMK1 and PKA is present on serine 650. S-nitrosocysteine is present on cysteine 657. Residues cysteine 657 to leucine 748 enclose the GED domain. The segment at tyrosine 667–lysine 681 is important for homodimerization.

It belongs to the TRAFAC class dynamin-like GTPase superfamily. Dynamin/Fzo/YdjA family. Homotetramer; dimerizes through the N-terminal GTP-middle region of one molecule binding to the GED domain of another DNM1L molecule. Oligomerizes in a GTP-dependent manner to form membrane-associated tubules with a spiral pattern. Interacts with GSK3B and MARCHF5. Interacts (via the GTPase and B domains) with UBE2I; the interaction promotes sumoylation of DNM1L, mainly in its B domain. Interacts with PPP3CA; the interaction dephosphorylates DNM1L and regulates its transition to mitochondria. Interacts with BCL2L1 isoform BCL-X(L) and CLTA; DNM1L and BCL2L1 isoform BCL-X(L) may form a complex in synaptic vesicles that also contains clathrin and MFF. Interacts with MFF; the interaction is inhinited by C11orf65/MFI. Interacts with FIS1. Interacts with MIEF2 and MIEF1; GTP-dependent, regulates GTP hydrolysis and DNM1L oligomerization. Interacts with PGAM5; this interaction leads to dephosphorylation at Ser-656 and activation of GTPase activity and eventually to mitochondria fragmentation. Interacts with RALBP1; during mitosis, recruits DNM1L to the mitochondrion and mediates its activation by the mitotic kinase cyclin B-CDK1. Post-translationally, phosphorylation/dephosphorylation events on two sites near the GED domain regulate mitochondrial fission. Phosphorylation on Ser-650 by CAMK1 and PKA inhibits the GTPase activity, leading to a defect in mitochondrial fission promoting mitochondrial elongation. Dephosphorylated on this site by PPP3CA which promotes mitochondrial fission. Phosphorylation on Ser-629 by CDK1 and PINK1 activates the GTPase activity and promotes mitochondrial fission. Phosphorylated in a circadian manner at Ser-650. Sumoylated on various lysine residues within the B domain, probably by MUL1. Sumoylation positively regulates mitochondrial fission. Desumoylated by SENP5 during G2/M transition of mitosis. Appears to be linked to its catalytic activity. In terms of processing, S-nitrosylation increases DNM1L dimerization, mitochondrial fission and causes neuronal damage. Post-translationally, O-GlcNAcylation augments the level of the GTP-bound active form of DNM1L and induces translocation from the cytoplasm to mitochondria in cardiomyocytes. It also decreases phosphorylation at Ser-650. Ubiquitination by MARCHF5 affects mitochondrial morphology.

Its subcellular location is the cytoplasm. It localises to the cytosol. It is found in the golgi apparatus. The protein resides in the endomembrane system. The protein localises to the mitochondrion outer membrane. Its subcellular location is the peroxisome. It localises to the membrane. It is found in the clathrin-coated pit. The protein resides in the cytoplasmic vesicle. The protein localises to the secretory vesicle. Its subcellular location is the synaptic vesicle membrane. It catalyses the reaction GTP + H2O = GDP + phosphate + H(+). Functions in mitochondrial and peroxisomal division. Mediates membrane fission through oligomerization into membrane-associated tubular structures that wrap around the scission site to constrict and sever the mitochondrial membrane through a GTP hydrolysis-dependent mechanism. The specific recruitment at scission sites is mediated by membrane receptors like MFF, MIEF1 and MIEF2 for mitochondrial membranes. While the recruitment by the membrane receptors is GTP-dependent, the following hydrolysis of GTP induces the dissociation from the receptors and allows DNM1L filaments to curl into closed rings that are probably sufficient to sever a double membrane. Acts downstream of PINK1 to promote mitochondrial fission in a PRKN-dependent manner. Plays an important role in mitochondrial fission during mitosis. Through its function in mitochondrial division, ensures the survival of at least some types of postmitotic neurons, including Purkinje cells, by suppressing oxidative damage. Required for normal brain development, including that of cerebellum. Facilitates developmentally regulated apoptosis during neural tube formation. Required for a normal rate of cytochrome c release and caspase activation during apoptosis; this requirement may depend upon the cell type and the physiological apoptotic cues. Required for formation of endocytic vesicles. Proposed to regulate synaptic vesicle membrane dynamics through association with BCL2L1 isoform Bcl-X(L) which stimulates its GTPase activity in synaptic vesicles; the function may require its recruitment by MFF to clathrin-containing vesicles. Required for programmed necrosis execution. Rhythmic control of its activity following phosphorylation at Ser-650 is essential for the circadian control of mitochondrial ATP production. The protein is Dynamin-1-like protein of Bos taurus (Bovine).